A 336-amino-acid polypeptide reads, in one-letter code: DNA polymerase III subunit delta' (336 aa).

In terms of assembly, DNA polymerase III contains a core (composed of alpha, epsilon and theta chains) that associates with a tau subunit. This core dimerizes to form the POLIII' complex. PolIII' associates with the gamma complex (composed of gamma, delta, delta', psi and chi chains) and with the beta chain to form the complete DNA polymerase III complex.

The enzyme catalyses DNA(n) + a 2'-deoxyribonucleoside 5'-triphosphate = DNA(n+1) + diphosphate. Functionally, DNA polymerase III is a complex, multichain enzyme responsible for most of the replicative synthesis in bacteria. This DNA polymerase also exhibits 3' to 5' exonuclease activity. This chain is DNA polymerase III subunit delta' (holB), found in Buchnera aphidicola subsp. Baizongia pistaciae (strain Bp).